The following is a 111-amino-acid chain: Toxin 3FTx-Tri3 (111 aa).

The N-terminal stretch at 1-19 is a signal peptide; sequence MKTLLLALVVVAFMCLGSA. A propeptide spanning residues 20 to 34 is cleaved from the precursor; that stretch reads DEVGLGNEQIDRGRR. Q35 is modified (pyrrolidone carboxylic acid). 4 disulfide bridges follow: C44/C68, C47/C87, C91/C102, and C103/C108.

It belongs to the three-finger toxin family. Ancestral subfamily. Boigatoxin sub-subfamily. In terms of tissue distribution, expressed by the venom gland.

It is found in the secreted. Potent postsynaptic neurotoxin. Displays readily reversible competitive antagonism at the nicotinic acetylcholine receptor (nAChR). In Trimorphodon biscutatus (Western lyre snake), this protein is Toxin 3FTx-Tri3.